The sequence spans 206 residues: Small ribosomal subunit protein uS4 (206 aa).

Positions 96–156 constitute an S4 RNA-binding domain; the sequence is GRLDNVVYRM…EKAKKQARIK (61 aa).

It belongs to the universal ribosomal protein uS4 family. In terms of assembly, part of the 30S ribosomal subunit. Contacts protein S5. The interaction surface between S4 and S5 is involved in control of translational fidelity.

In terms of biological role, one of the primary rRNA binding proteins, it binds directly to 16S rRNA where it nucleates assembly of the body of the 30S subunit. Functionally, with S5 and S12 plays an important role in translational accuracy. The chain is Small ribosomal subunit protein uS4 from Tolumonas auensis (strain DSM 9187 / NBRC 110442 / TA 4).